The sequence spans 606 residues: Peptide-N(4)-(N-acetyl-beta-glucosaminyl)asparagine amidase (606 aa).

The Thioredoxin domain maps to 2-108; sequence PVTEVGSLPE…IAEKIRQHYS (107 aa). The Zn(2+) site is built by C191, C194, C225, and C228. The active-site Nucleophile is the C251. Active-site residues include H278 and D295. Residues 404–606 enclose the PAW domain; it reads DLGGRITGSE…SFSVKIWMKN (203 aa).

The protein belongs to the transglutaminase-like superfamily. PNGase family. The cofactor is Zn(2+).

The protein resides in the cytoplasm. It is found in the endoplasmic reticulum. The enzyme catalyses Hydrolysis of an N(4)-(acetyl-beta-D-glucosaminyl)asparagine residue in which the glucosamine residue may be further glycosylated, to yield a (substituted) N-acetyl-beta-D-glucosaminylamine and a peptide containing an aspartate residue.. With respect to regulation, inhibited by Zn(2+) and z-VAD-fmk (caspase inhibitor) but unaffected by EDTA. Its function is as follows. Specifically deglycosylates the denatured form of N-linked glycoproteins in the cytoplasm and assists their proteasome-mediated degradation. Cleaves the beta-aspartyl-glucosamine (GlcNAc) of the glycan and the amide side chain of Asn, converting Asn to Asp. Prefers proteins containing high-mannose over those bearing complex type oligosaccharides. Can recognize misfolded proteins in the endoplasmic reticulum that are exported to the cytosol to be destroyed and deglycosylate them, while it has no activity toward native proteins. Deglycosylation is a prerequisite for subsequent proteasome-mediated degradation of some, but not all, misfolded glycoproteins. Also displays oxidoreductase (thioredoxin) activity. Involved in regulating the expression of proteasomal subunits such as rpt-3 in order to confer resistance to proteasomal dysfunction. This Caenorhabditis elegans protein is Peptide-N(4)-(N-acetyl-beta-glucosaminyl)asparagine amidase (png-1).